Reading from the N-terminus, the 103-residue chain is Trp operon repressor homolog (103 aa).

The DNA-binding element occupies 62–85; the sequence is QRKISELLGVGVATITRGSNELKH.

Belongs to the TrpR family. In terms of assembly, homodimer.

It is found in the cytoplasm. In terms of biological role, this protein is an aporepressor. When complexed with L-tryptophan it binds the operator region of the trp operon and prevents the initiation of transcription. The polypeptide is Trp operon repressor homolog (Photobacterium profundum (strain SS9)).